We begin with the raw amino-acid sequence, 143 residues long: uncharacterized protein (143 aa).

Residues 1–143 (MRSSRQKASI…WFSQTVKRKA (143 aa)) are disordered. Basic and acidic residues-rich tracts occupy residues 34-46 (ISAE…KHLD) and 61-76 (EYQK…RKIV). Composition is skewed to acidic residues over residues 77–93 (DDEE…PEEE) and 103–115 (YEEE…PDLA).

This is an uncharacterized protein from Bacillus subtilis (strain 168).